The primary structure comprises 424 residues: Dihydroorotase (424 aa).

Positions 61 and 63 each coordinate Zn(2+). Substrate contacts are provided by residues 63-65 (HLR) and asparagine 95. Residues aspartate 153, histidine 180, and histidine 233 each coordinate Zn(2+). Position 279 (asparagine 279) interacts with substrate. Aspartate 306 lines the Zn(2+) pocket. Aspartate 306 is a catalytic residue. Histidine 310 is a substrate binding site.

Belongs to the metallo-dependent hydrolases superfamily. DHOase family. Class I DHOase subfamily. It depends on Zn(2+) as a cofactor.

The enzyme catalyses (S)-dihydroorotate + H2O = N-carbamoyl-L-aspartate + H(+). Its pathway is pyrimidine metabolism; UMP biosynthesis via de novo pathway; (S)-dihydroorotate from bicarbonate: step 3/3. Its function is as follows. Catalyzes the reversible cyclization of carbamoyl aspartate to dihydroorotate. The sequence is that of Dihydroorotase from Pelobacter propionicus (strain DSM 2379 / NBRC 103807 / OttBd1).